The following is an 849-amino-acid chain: A-kinase anchor protein 4 (849 aa).

A propeptide spanning residues 1 to 188 is cleaved from the precursor; the sequence is MIAYCGTTTM…MAASKNTNNN (188 aa). A phosphoserine mark is found at S96, S130, S190, and S204. The segment covering 183–205 has biased composition (polar residues); it reads KNTNNNQSPSNPATKSPSNQRSV. Positions 183–210 are disordered; sequence KNTNNNQSPSNPATKSPSNQRSVATPEG. At T207 the chain carries Phosphothreonine. Residues S213, S226, and S271 each carry the phosphoserine modification. The interval 219–232 is PKA-RI and PKA-RII subunit binding domain; the sequence is FYVNRLSSLVIQMA. Y301 is subject to Phosphotyrosine. Residues S302, S341, S431, S442, S444, S463, S492, S497, and S504 each carry the phosphoserine modification. The PKA-RI-alpha subunit binding domain stretch occupies residues 335 to 344; it reads YANQVASDMM. At T506 the chain carries Phosphothreonine. At S538 the chain carries Phosphoserine. S583 carries the phosphoserine; by STK33 modification. Phosphoserine is present on residues S628, S633, S652, and S702.

This sequence belongs to the AKAP110 family. Interacts with PRKAR1A and PRKAR2A. Interacts with ENO4. Interacts with QRICH2. In terms of processing, phosphorylated by STK33 during sperm flagella assembly. Expressed in the fibrous sheath of spermatozoa (at protein level). Expressed in step 1 to step 6 spermatids, abundance then increases during steps 8 to 12, abundance decreases thereafter.

It localises to the cell projection. The protein localises to the cilium. Its subcellular location is the flagellum. Major structural component of sperm fibrous sheath. Plays a role in sperm motility. The chain is A-kinase anchor protein 4 from Mus musculus (Mouse).